We begin with the raw amino-acid sequence, 228 residues long: Prolactin-2A1 (228 aa).

Positions 1 to 28 (MQLSVTHPCCRTLILLLVSNLLLWESEA) are cleaved as a signal peptide. Cystine bridges form between Cys-87–Cys-203 and Cys-220–Cys-228.

Belongs to the somatotropin/prolactin family. In terms of tissue distribution, expressed specifically in the placenta. Expression restricted to the junctional zone of the chorioallantoic placenta.

Its subcellular location is the secreted. This is Prolactin-2A1 (Prl2a1) from Mus musculus (Mouse).